Consider the following 417-residue polypeptide: Multifunctional CCA protein (417 aa).

The ATP site is built by Gly-8 and Arg-11. Residues Gly-8 and Arg-11 each contribute to the CTP site. Mg(2+) contacts are provided by Asp-21 and Asp-23. Residues Arg-91, Arg-137, and Arg-140 each coordinate ATP. Positions 91, 137, and 140 each coordinate CTP. The HD domain maps to 225–326 (SGIHTLMTLQ…LNVLKKTDAF (102 aa)).

Belongs to the tRNA nucleotidyltransferase/poly(A) polymerase family. Bacterial CCA-adding enzyme type 1 subfamily. In terms of assembly, monomer. Can also form homodimers and oligomers. Mg(2+) serves as cofactor. Requires Ni(2+) as cofactor.

The enzyme catalyses a tRNA precursor + 2 CTP + ATP = a tRNA with a 3' CCA end + 3 diphosphate. It catalyses the reaction a tRNA with a 3' CCA end + 2 CTP + ATP = a tRNA with a 3' CCACCA end + 3 diphosphate. Catalyzes the addition and repair of the essential 3'-terminal CCA sequence in tRNAs without using a nucleic acid template. Adds these three nucleotides in the order of C, C, and A to the tRNA nucleotide-73, using CTP and ATP as substrates and producing inorganic pyrophosphate. tRNA 3'-terminal CCA addition is required both for tRNA processing and repair. Also involved in tRNA surveillance by mediating tandem CCA addition to generate a CCACCA at the 3' terminus of unstable tRNAs. While stable tRNAs receive only 3'-terminal CCA, unstable tRNAs are marked with CCACCA and rapidly degraded. The sequence is that of Multifunctional CCA protein from Neisseria meningitidis serogroup C / serotype 2a (strain ATCC 700532 / DSM 15464 / FAM18).